We begin with the raw amino-acid sequence, 96 residues long: Co-chaperonin GroES (96 aa).

This sequence belongs to the GroES chaperonin family. In terms of assembly, heptamer of 7 subunits arranged in a ring. Interacts with the chaperonin GroEL.

The protein localises to the cytoplasm. Together with the chaperonin GroEL, plays an essential role in assisting protein folding. The GroEL-GroES system forms a nano-cage that allows encapsulation of the non-native substrate proteins and provides a physical environment optimized to promote and accelerate protein folding. GroES binds to the apical surface of the GroEL ring, thereby capping the opening of the GroEL channel. This Alteromonas mediterranea (strain DSM 17117 / CIP 110805 / LMG 28347 / Deep ecotype) protein is Co-chaperonin GroES.